Reading from the N-terminus, the 196-residue chain is Protein TEX261 (196 aa).

A run of 5 helical transmembrane segments spans residues 3-23 (FMYLLSWLSLFIQVAFITLAV), 42-62 (SRIIKYMIWFSTAVLIGLYVF), 70-90 (IGVGLFTNLVYFGLLQTFPFI), 97-117 (FILSCGLVVVNHYLAFQFFAE), and 125-145 (VLAYFTFCLWIIPFAFFVSLS).

It belongs to the SVP26 family.

Its subcellular location is the membrane. In Homo sapiens (Human), this protein is Protein TEX261 (TEX261).